A 149-amino-acid chain; its full sequence is Large ribosomal subunit protein uL24 (149 aa).

The interval 114 to 149 (RKIIERSGGTPEVEAVPEKSEEEKEEKEKEEEKSEE) is disordered. Basic and acidic residues predominate over residues 129–149 (VPEKSEEEKEEKEKEEEKSEE).

The protein belongs to the universal ribosomal protein uL24 family. As to quaternary structure, part of the 50S ribosomal subunit.

Its function is as follows. One of two assembly initiator proteins, it binds directly to the 5'-end of the 23S rRNA, where it nucleates assembly of the 50S subunit. In terms of biological role, located at the polypeptide exit tunnel on the outside of the subunit. In Methanopyrus kandleri (strain AV19 / DSM 6324 / JCM 9639 / NBRC 100938), this protein is Large ribosomal subunit protein uL24.